The following is a 92-amino-acid chain: Small ribosomal subunit protein uS15c (92 aa).

This sequence belongs to the universal ribosomal protein uS15 family. In terms of assembly, part of the 30S ribosomal subunit.

It is found in the plastid. Its subcellular location is the chloroplast. The protein is Small ribosomal subunit protein uS15c (rps15) of Guizotia abyssinica (Niger).